The sequence spans 101 residues: UPF0358 protein EF_2458 (101 aa).

The protein belongs to the UPF0358 family.

The sequence is that of UPF0358 protein EF_2458 from Enterococcus faecalis (strain ATCC 700802 / V583).